Consider the following 349-residue polypeptide: Flap endonuclease 1 (349 aa).

Residues 1-102 (MGVTELGKLI…AEIEARRRVK (102 aa)) are N-domain. Mg(2+) is bound by residues Asp-31, Asp-84, Glu-156, Glu-158, Asp-177, Asp-179, and Asp-239. An I-domain region spans residues 120-261 (DVAKYMKRVI…KALKLVLEFG (142 aa)).

This sequence belongs to the XPG/RAD2 endonuclease family. FEN1 subfamily. Interacts with PCNA. PCNA stimulates the nuclease activity without altering cleavage specificity. The cofactor is Mg(2+).

Functionally, structure-specific nuclease with 5'-flap endonuclease and 5'-3' exonuclease activities involved in DNA replication and repair. During DNA replication, cleaves the 5'-overhanging flap structure that is generated by displacement synthesis when DNA polymerase encounters the 5'-end of a downstream Okazaki fragment. Binds the unpaired 3'-DNA end and kinks the DNA to facilitate 5' cleavage specificity. Cleaves one nucleotide into the double-stranded DNA from the junction in flap DNA, leaving a nick for ligation. Also involved in the base excision repair (BER) pathway. Acts as a genome stabilization factor that prevents flaps from equilibrating into structures that lead to duplications and deletions. Also possesses 5'-3' exonuclease activity on nicked or gapped double-stranded DNA. The protein is Flap endonuclease 1 of Pyrobaculum neutrophilum (strain DSM 2338 / JCM 9278 / NBRC 100436 / V24Sta) (Thermoproteus neutrophilus).